Here is a 379-residue protein sequence, read N- to C-terminus: MEDAHHHHWTMVERRGTQLWASGRPFIIHGFNTYWLMSFAADQATRLRVTAAIAEAGLNVCCTWAFSDGGYRALQTAPFHYDEDVFRALDFVVSEARRHNMRLILSLCNNWEDYGGKAQYVRWGKEAGLDLTSEDDFFSDPTIKSYYKAFVEAVVTRINTVTNETYKDDPTILAWELINEPRCPSDPSGDTLQAWMEEMASYVKSIDPVHLLEIGIEGFYGPSIPELLPVNPDEYSGHAGIDFIRNHQAPGIDLASIHVYSDIWLPQSIKENHLQFVDKWMQQHIDDAANLLGMPIVVGEFGVSVKDGKFGNEFREDFMKTIYRIFLSSWKEGVIGGGCLLWQLFPEGAEHMDDGYAVIFAKSPSTLSLLANHLRCLEC.

Positions 64 and 179 each coordinate substrate. Glu180 functions as the Proton donor in the catalytic mechanism. Tyr260 is a substrate binding site. Glu300 serves as the catalytic Nucleophile. Position 342 (Trp342) interacts with substrate.

This sequence belongs to the glycosyl hydrolase 5 (cellulase A) family. As to expression, expression not detected.

It carries out the reaction Random hydrolysis of (1-&gt;4)-beta-D-mannosidic linkages in mannans, galactomannans and glucomannans.. The sequence is that of Mannan endo-1,4-beta-mannosidase 7 (MAN7) from Oryza sativa subsp. japonica (Rice).